Here is a 437-residue protein sequence, read N- to C-terminus: Aspartate aminotransferase, mitochondrial (437 aa).

Gly72, Trp167, and Asn220 together coordinate L-aspartate. The residue at position 284 (Lys284) is an N6-(pyridoxal phosphate)lysine. Arg413 provides a ligand contact to L-aspartate.

It belongs to the class-I pyridoxal-phosphate-dependent aminotransferase family. In terms of assembly, homodimer. Pyridoxal 5'-phosphate serves as cofactor.

The protein resides in the mitochondrion matrix. It carries out the reaction L-aspartate + 2-oxoglutarate = oxaloacetate + L-glutamate. Functionally, plays a key role in amino acid metabolism. Important for metabolite exchange between mitochondria and cytosol. This is Aspartate aminotransferase, mitochondrial from Schizosaccharomyces pombe (strain 972 / ATCC 24843) (Fission yeast).